The primary structure comprises 292 residues: Probable 2-(5''-triphosphoribosyl)-3'-dephosphocoenzyme-A synthase (292 aa).

It belongs to the CitG/MdcB family.

It carries out the reaction 3'-dephospho-CoA + ATP = 2'-(5''-triphospho-alpha-D-ribosyl)-3'-dephospho-CoA + adenine. This chain is Probable 2-(5''-triphosphoribosyl)-3'-dephosphocoenzyme-A synthase, found in Shigella flexneri.